A 223-amino-acid polypeptide reads, in one-letter code: MNKKEKLELLKDFNLYCLTCEEYSIGRKNIDVVREILEAGVKIIQYREKKKPMREKYHEVVKIRDLTAKYNALLIVNDHLDLTKIVEADGVHIGQEDYPIEVAKEFLGENFIIGLTTHTKEQVMEALRKGADYIGLGPIFPSYTKEKPHPPIGIEILDWAIKNISIPVVAIGGIKESNIHEILNLGAKCIAMVTEIVSSPNIYEKTRKIIHILEGYKNGKYIA.

4-amino-2-methyl-5-(diphosphooxymethyl)pyrimidine is bound by residues 45-49 (QYREK) and N77. Positions 78 and 97 each coordinate Mg(2+). T116 serves as a coordination point for 4-amino-2-methyl-5-(diphosphooxymethyl)pyrimidine. 142-144 (SYT) is a 2-[(2R,5Z)-2-carboxy-4-methylthiazol-5(2H)-ylidene]ethyl phosphate binding site. Position 145 (K145) interacts with 4-amino-2-methyl-5-(diphosphooxymethyl)pyrimidine. Residues G173 and 193–194 (VT) contribute to the 2-[(2R,5Z)-2-carboxy-4-methylthiazol-5(2H)-ylidene]ethyl phosphate site.

This sequence belongs to the thiamine-phosphate synthase family. Mg(2+) serves as cofactor.

The catalysed reaction is 2-[(2R,5Z)-2-carboxy-4-methylthiazol-5(2H)-ylidene]ethyl phosphate + 4-amino-2-methyl-5-(diphosphooxymethyl)pyrimidine + 2 H(+) = thiamine phosphate + CO2 + diphosphate. It catalyses the reaction 2-(2-carboxy-4-methylthiazol-5-yl)ethyl phosphate + 4-amino-2-methyl-5-(diphosphooxymethyl)pyrimidine + 2 H(+) = thiamine phosphate + CO2 + diphosphate. The enzyme catalyses 4-methyl-5-(2-phosphooxyethyl)-thiazole + 4-amino-2-methyl-5-(diphosphooxymethyl)pyrimidine + H(+) = thiamine phosphate + diphosphate. Its pathway is cofactor biosynthesis; thiamine diphosphate biosynthesis; thiamine phosphate from 4-amino-2-methyl-5-diphosphomethylpyrimidine and 4-methyl-5-(2-phosphoethyl)-thiazole: step 1/1. In terms of biological role, condenses 4-methyl-5-(beta-hydroxyethyl)thiazole monophosphate (THZ-P) and 2-methyl-4-amino-5-hydroxymethyl pyrimidine pyrophosphate (HMP-PP) to form thiamine monophosphate (TMP). The sequence is that of Thiamine-phosphate synthase from Dictyoglomus turgidum (strain DSM 6724 / Z-1310).